The sequence spans 212 residues: ER lumen protein-retaining receptor 2 (212 aa).

The Lumenal segment spans residues 1 to 4 (MNIF). A helical membrane pass occupies residues 5-24 (RLTGDLSHLAAIVILLLKIW). Residues 25-32 (KTRSCAGI) lie on the Cytoplasmic side of the membrane. A helical membrane pass occupies residues 33–52 (SGKSQLLFALVFTTRYLDLF). Residues 47 to 48 (RY) are interaction with the K-D-E-L motif on target proteins. The Lumenal segment spans residues 53–58 (TSFISL). A helical membrane pass occupies residues 59–79 (YNTSMKVIYLACSYATVYLIY). The Cytoplasmic portion of the chain corresponds to 80–92 (LKFKATYDGNHDT). Residues 93–110 (FRVEFLVVPVGGLSFLVN) traverse the membrane as a helical segment. Topologically, residues 111–116 (HDFSPL) are lumenal. Residues 117-135 (EILWTFSIYLESVAILPQL) form a helical membrane-spanning segment. The Cytoplasmic portion of the chain corresponds to 136 to 149 (FMISKTGEAETITT). A helical transmembrane segment spans residues 150 to 168 (HYLFFLGLYRALYLVNWIW). Residues 159-169 (RALYLVNWIWR) are interaction with the K-D-E-L motif on target proteins. The Lumenal portion of the chain corresponds to 169–178 (RFYFEGFFDL). A helical membrane pass occupies residues 179 to 199 (IAVVAGVVQTILYCDFFYLYI). Topologically, residues 200–212 (TKVLKGKKLSLPA) are cytoplasmic. The interval 204–207 (KGKK) is important for recycling of cargo proteins with the sequence motif K-D-E-L from the Golgi to the endoplasmic reticulum.

This sequence belongs to the ERD2 family.

The protein localises to the endoplasmic reticulum membrane. It localises to the golgi apparatus membrane. It is found in the cytoplasmic vesicle. The protein resides in the COPI-coated vesicle membrane. Its function is as follows. Membrane receptor that binds the K-D-E-L sequence motif in the C-terminal part of endoplasmic reticulum resident proteins and maintains their localization in that compartment by participating to their vesicle-mediated recycling back from the Golgi. Binding is pH dependent, and is optimal at pH 5-5.4. The protein is ER lumen protein-retaining receptor 2 (KDELR2) of Homo sapiens (Human).